We begin with the raw amino-acid sequence, 81 residues long: MKKGIHPDYHPVVFQDSATGFKFLSGSTVGSAETIKWEDGNEYPLIRVEITSDSHPFYTGRQKFQQADGTVAKFNKKYGLA.

This sequence belongs to the bacterial ribosomal protein bL31 family. Type B subfamily. As to quaternary structure, part of the 50S ribosomal subunit.

This Pediococcus pentosaceus (strain ATCC 25745 / CCUG 21536 / LMG 10740 / 183-1w) protein is Large ribosomal subunit protein bL31B.